The primary structure comprises 338 residues: Uroporphyrinogen decarboxylase (338 aa).

Substrate is bound by residues 21–25, D71, Y146, S201, and H316; that span reads RQAGR.

It belongs to the uroporphyrinogen decarboxylase family. In terms of assembly, homodimer.

The protein resides in the cytoplasm. It carries out the reaction uroporphyrinogen III + 4 H(+) = coproporphyrinogen III + 4 CO2. Its pathway is porphyrin-containing compound metabolism; protoporphyrin-IX biosynthesis; coproporphyrinogen-III from 5-aminolevulinate: step 4/4. In terms of biological role, catalyzes the decarboxylation of four acetate groups of uroporphyrinogen-III to yield coproporphyrinogen-III. In Rickettsia akari (strain Hartford), this protein is Uroporphyrinogen decarboxylase.